Reading from the N-terminus, the 327-residue chain is Olfactory receptor 9G4 (327 aa).

The Extracellular portion of the chain corresponds to 1 to 43 (MIFPSHDSQAFTSVDMEVGNCTILTEFILLGFSADSQWQPILF). N-linked (GlcNAc...) asparagine glycosylation occurs at N20. A helical membrane pass occupies residues 44 to 64 (GVFLMLYLITLSGNMTLVILI). At 65–71 (RTDSHLH) the chain is on the cytoplasmic side. The helical transmembrane segment at 72–92 (TPMYFFIGNLSFLDFWYTSVY) threads the bilayer. The Extracellular segment spans residues 93–113 (TPKILASCVSEDKRISLAGCG). C112 and C194 are joined by a disulfide. The helical transmembrane segment at 114-134 (AQLFFSCVVAYTECYLLAAMA) threads the bilayer. The Cytoplasmic segment spans residues 135–152 (YDRHAAICNPLLYSGTMS). The chain crosses the membrane as a helical span at residues 153 to 173 (TALCTGLVAGSYIGGFLNAIA). The Extracellular portion of the chain corresponds to 174 to 212 (HTANTFRLHFCGKNIIDHFFCDAPPLVKMSCTNTRVYEK). Residues 213–233 (VLLGVVGFTVLSSILAILISY) traverse the membrane as a helical segment. Topologically, residues 234–252 (VNILLAILRIHSASGRHKA) are cytoplasmic. The helical transmembrane segment at 253 to 273 (FSTCASHLISVMLFYGSLLFM) threads the bilayer. Residues 274–286 (YSRPSSTYSLERD) are Extracellular-facing. A helical transmembrane segment spans residues 287-307 (KVAALFYTVINPLLNPLIYSL). At 308–327 (RNKDIKEAFRKATQTIQPQT) the chain is on the cytoplasmic side.

This sequence belongs to the G-protein coupled receptor 1 family.

The protein resides in the cell membrane. In terms of biological role, odorant receptor. This is Olfactory receptor 9G4 (OR9G4) from Homo sapiens (Human).